Reading from the N-terminus, the 51-residue chain is Large ribosomal subunit protein bL33 (51 aa).

Belongs to the bacterial ribosomal protein bL33 family.

This chain is Large ribosomal subunit protein bL33, found in Pseudoalteromonas atlantica (strain T6c / ATCC BAA-1087).